Reading from the N-terminus, the 372-residue chain is DNA replication and repair protein RecF (372 aa).

ATP is bound at residue 30 to 37 (GENGQGKT).

It belongs to the RecF family.

It is found in the cytoplasm. In terms of biological role, the RecF protein is involved in DNA metabolism; it is required for DNA replication and normal SOS inducibility. RecF binds preferentially to single-stranded, linear DNA. It also seems to bind ATP. In Anaeromyxobacter sp. (strain K), this protein is DNA replication and repair protein RecF.